Here is a 219-residue protein sequence, read N- to C-terminus: Glutathione S-transferase 3 (219 aa).

Residues 3 to 82 (DEVVLLDTWA…YIDEVWNDKS (80 aa)) enclose the GST N-terminal domain. Glutathione-binding positions include serine 13, isoleucine 54, and 66–67 (ES). A GST C-terminal domain is found at 88 to 216 (DPYKRSQARF…GLIVELQKTL (129 aa)).

The protein belongs to the GST superfamily. HSP26 family. Homodimer. degradation; (R)-lactate from methylglyoxal: step 1/2.

The catalysed reaction is RX + glutathione = an S-substituted glutathione + a halide anion + H(+). Conjugation of reduced glutathione to a wide number of exogenous and endogenous hydrophobic electrophiles. Involved in the detoxification of certain herbicides. The chain is Glutathione S-transferase 3 (GST3) from Glycine max (Soybean).